A 446-amino-acid chain; its full sequence is Glutamine synthetase (446 aa).

The GS beta-grasp domain maps to 14 to 106 (NNVKFIRFQF…VICDVYTTNG (93 aa)). Residues 113-446 (PRGCLKRVLA…DWETKQYLKI (334 aa)) enclose the GS catalytic domain. Mg(2+) contacts are provided by glutamate 137 and glutamate 139. Glutamate 187 lines the ATP pocket. Residues glutamate 192 and glutamate 199 each coordinate Mg(2+). Residues 243–244 (NG) and glycine 244 each bind L-glutamate. Histidine 248 is a binding site for Mg(2+). ATP-binding positions include 250-252 (HQS) and serine 252. L-glutamate is bound by residues arginine 301, glutamate 307, and arginine 319. 3 residues coordinate ATP: arginine 319, arginine 324, and lysine 331. Glutamate 336 provides a ligand contact to Mg(2+). Arginine 338 provides a ligand contact to L-glutamate.

It belongs to the glutamine synthetase family. Oligomer of 12 subunits arranged in the form of two hexagons. It depends on Mg(2+) as a cofactor.

It is found in the cytoplasm. It carries out the reaction L-glutamate + NH4(+) + ATP = L-glutamine + ADP + phosphate + H(+). Functionally, probably involved in nitrogen metabolism via ammonium assimilation. Catalyzes the ATP-dependent biosynthesis of glutamine from glutamate and ammonia. This chain is Glutamine synthetase, found in Methanococcus maripaludis (strain DSM 14266 / JCM 13030 / NBRC 101832 / S2 / LL).